Consider the following 392-residue polypeptide: Chaperone protein DnaJ (392 aa).

The region spanning 2 to 67 (DYYTILGVAK…QKRESYDRYG (66 aa)) is the J domain. The CR-type zinc finger occupies 149 to 227 (GVEKELLVSG…CRGQGRIKDK (79 aa)). Cys-162, Cys-165, Cys-179, Cys-182, Cys-201, Cys-204, Cys-215, and Cys-218 together coordinate Zn(2+). 4 CXXCXGXG motif repeats span residues 162–169 (CDACSGSG), 179–186 (CDRCKGSG), 201–208 (CPDCSGEG), and 215–222 (CSECRGQG).

This sequence belongs to the DnaJ family. In terms of assembly, homodimer. It depends on Zn(2+) as a cofactor.

It is found in the cytoplasm. In terms of biological role, participates actively in the response to hyperosmotic and heat shock by preventing the aggregation of stress-denatured proteins and by disaggregating proteins, also in an autonomous, DnaK-independent fashion. Unfolded proteins bind initially to DnaJ; upon interaction with the DnaJ-bound protein, DnaK hydrolyzes its bound ATP, resulting in the formation of a stable complex. GrpE releases ADP from DnaK; ATP binding to DnaK triggers the release of the substrate protein, thus completing the reaction cycle. Several rounds of ATP-dependent interactions between DnaJ, DnaK and GrpE are required for fully efficient folding. Also involved, together with DnaK and GrpE, in the DNA replication of plasmids through activation of initiation proteins. The polypeptide is Chaperone protein DnaJ (Chlamydia muridarum (strain MoPn / Nigg)).